Reading from the N-terminus, the 872-residue chain is Cyanophycin synthetase (872 aa).

Residues 224–480 form the ATP-grasp domain; that stretch reads KTILQDAGVP…VAAPVMDMLF (257 aa). 495–501 is a binding site for ATP; the sequence is GTNGKTT.

The protein in the C-terminal section; belongs to the MurCDEF family. As to quaternary structure, homodimer.

It carries out the reaction [L-4-(L-arginin-2-N-yl)aspartate](n) + L-aspartate + ATP = [L-4-(L-arginin-2-N-yl)aspartate](n)-L-aspartate + ADP + phosphate + H(+). It catalyses the reaction [L-4-(L-arginin-2-N-yl)aspartate](n)-L-aspartate + L-arginine + ATP = [L-4-(L-arginin-2-N-yl)aspartate](n+1) + ADP + phosphate + H(+). In terms of biological role, catalyzes the ATP-dependent polymerization of arginine and aspartate to multi-L-arginyl-poly-L-aspartic acid (cyanophycin; a water-insoluble reserve polymer). In Crocosphaera subtropica (strain ATCC 51142 / BH68) (Cyanothece sp. (strain ATCC 51142)), this protein is Cyanophycin synthetase (cphA).